The sequence spans 495 residues: Internal alternative NAD(P)H-ubiquinone oxidoreductase A1, mitochondrial (495 aa).

A mitochondrion-targeting transit peptide spans 1–41 (MPWFKNLIKISKTITNQSSSYKSITPLASPLLTQFLQFTKQ). Residue 61 to 91 (RIVVLGSGWAGCRLMKDIDTNIYDVVCVSPR) participates in FAD binding. Residue 228 to 264 (LHCVVVGGGPTGVEFSGELSDFILKDVHQRYAHVKDY) coordinates NAD(+). Positions 486-495 (LVFGRDISRI) match the Microbody targeting signal motif.

It belongs to the NADH dehydrogenase family. The cofactor is FAD.

It localises to the mitochondrion inner membrane. The protein localises to the peroxisome. The catalysed reaction is a quinone + NADH + H(+) = a quinol + NAD(+). It carries out the reaction a ubiquinone + NADH + H(+) = a ubiquinol + NAD(+). Functionally, alternative NADH-ubiquinone oxidoreductase which catalyzes the oxidation of mitochondrial NADH does not translocate protons across the inner mitochondrial membrane. The polypeptide is Internal alternative NAD(P)H-ubiquinone oxidoreductase A1, mitochondrial (NDA1) (Solanum tuberosum (Potato)).